A 415-amino-acid chain; its full sequence is Probable disease resistance protein At5g66890 (415 aa).

The 36-residue stretch at 8–43 folds into the NB-ARC domain; it reads SFDALPHNLRECFLDMASFLEDQRIIASTIIDLWSA. LRR repeat units lie at residues 229-251, 256-278, 280-303, 304-326, 328-351, and 352-373; these read SLEK…EDVS, SLQE…ISQV, SLKK…GDLR, DLET…IDRL, NLRF…GKLK, and KLEK…VKNL. Residues 239–260 adopt a coiled-coil conformation; it reads HVVDALNELEDVSETLQSLQEI.

Belongs to the disease resistance NB-LRR family.

Possible disease resistance protein. This is Probable disease resistance protein At5g66890 from Arabidopsis thaliana (Mouse-ear cress).